Reading from the N-terminus, the 145-residue chain is Bacilliredoxin SAOUHSC_01610 (145 aa).

The protein belongs to the bacilliredoxin family.

The polypeptide is Bacilliredoxin SAOUHSC_01610 (Staphylococcus aureus (strain NCTC 8325 / PS 47)).